The sequence spans 131 residues: Transcription antitermination protein NusB (131 aa).

It belongs to the NusB family.

In terms of biological role, involved in transcription antitermination. Required for transcription of ribosomal RNA (rRNA) genes. Binds specifically to the boxA antiterminator sequence of the ribosomal RNA (rrn) operons. The sequence is that of Transcription antitermination protein NusB from Agathobacter rectalis (strain ATCC 33656 / DSM 3377 / JCM 17463 / KCTC 5835 / VPI 0990) (Eubacterium rectale).